The following is a 478-amino-acid chain: Protein nucleotidyltransferase YdiU (478 aa).

8 residues coordinate ATP: glycine 84, glycine 86, arginine 87, lysine 107, aspartate 119, glycine 120, arginine 170, and arginine 177. Catalysis depends on aspartate 246, which acts as the Proton acceptor. Mg(2+) is bound by residues asparagine 247 and aspartate 256. Aspartate 256 contributes to the ATP binding site.

This sequence belongs to the SELO family. The cofactor is Mg(2+). Mn(2+) is required as a cofactor.

It carries out the reaction L-seryl-[protein] + ATP = 3-O-(5'-adenylyl)-L-seryl-[protein] + diphosphate. It catalyses the reaction L-threonyl-[protein] + ATP = 3-O-(5'-adenylyl)-L-threonyl-[protein] + diphosphate. The catalysed reaction is L-tyrosyl-[protein] + ATP = O-(5'-adenylyl)-L-tyrosyl-[protein] + diphosphate. The enzyme catalyses L-histidyl-[protein] + UTP = N(tele)-(5'-uridylyl)-L-histidyl-[protein] + diphosphate. It carries out the reaction L-seryl-[protein] + UTP = O-(5'-uridylyl)-L-seryl-[protein] + diphosphate. It catalyses the reaction L-tyrosyl-[protein] + UTP = O-(5'-uridylyl)-L-tyrosyl-[protein] + diphosphate. Its function is as follows. Nucleotidyltransferase involved in the post-translational modification of proteins. It can catalyze the addition of adenosine monophosphate (AMP) or uridine monophosphate (UMP) to a protein, resulting in modifications known as AMPylation and UMPylation. The sequence is that of Protein nucleotidyltransferase YdiU from Escherichia coli O139:H28 (strain E24377A / ETEC).